The following is a 512-amino-acid chain: Circadian clock oscillator protein KaiC (512 aa).

KaiC domains follow at residues 1 to 243 (MQFP…ISIF) and 257 to 512 (VRVS…SSED). ATP-binding residues include Gly45, Thr46, Gly47, Lys48, Thr49, Ser85, Lys220, Leu221, Arg222, Thr224, His226, Thr286, Gly287, Thr288, Gly289, Lys290, Thr291, and Leu292. Thr49 contacts Mg(2+). Residue Thr291 participates in Mg(2+) binding. Residue Glu314 participates in Mg(2+) binding. Trp327 is an ATP binding site. Ser427 carries the phosphoserine; by autocatalysis modification. Phosphothreonine; by autocatalysis is present on Thr428. ATP contacts are provided by Arg447, Lys453, Met454, Arg455, Ser457, His459, and Lys461.

The protein belongs to the KaiC family. Homohexamer; hexamerization is dependent on ATP-binding. The KaiABC complex composition changes during the circadian cycle to control KaiC phosphorylation. Complexes KaiC(6), KaiA(2-4):KaiC(6), KaiB(6):KaiC(6) and KaiC(6):KaiB(6):KaiA(12) are among the most important forms, many form cooperatively. KaiC interacts with SasA, activating its autokinase function and leading to RpaA activation. It depends on Mg(2+) as a cofactor. Phosphorylated on serine and threonine residues by autocatalysis. Has a 4 step phosphorylation cycle; the autokinase acts first on Thr-428, then Ser-427. When Ser-427 is modified KaiC switches to an autophosphatase mode, acting first on phospho-Thr-428 then phospho-Ser-427.

The catalysed reaction is L-seryl-[protein] + ATP = O-phospho-L-seryl-[protein] + ADP + H(+). It carries out the reaction L-threonyl-[protein] + ATP = O-phospho-L-threonyl-[protein] + ADP + H(+). The enzyme catalyses ATP + H2O = ADP + phosphate + H(+). With respect to regulation, the interaction with KaiA enhances its phosphorylation status, while the interaction with KaiB decreases it. Central component of the KaiABC oscillator complex, which constitutes the main circadian regulator in cyanobacteria. Complex composition changes during the circadian cycle to control KaiC phosphorylation. KaiA stimulates KaiC autophosphorylation, while KaiB sequesters KaiA, leading to KaiC autodephosphorylation. Clock output pathways impact the RpaA transcriptional regulator. KaiC enhances the autophosphorylation activity of SasA, which then transfers its phosphate group to RpaA to activate it. KaiB and KaiC together enhance the phospho-RpaA dephosphatase activity of CikA. Its function is as follows. Has a weak, temperature-independent ATPase activity; ATPase activity defines the circadian period. The phosphorylation state of KaiC modulates its ATPase activity and effects KaiB binding. The polypeptide is Circadian clock oscillator protein KaiC (Parasynechococcus marenigrum (strain WH8102)).